We begin with the raw amino-acid sequence, 291 residues long: ATP synthase gamma chain (291 aa).

Belongs to the ATPase gamma chain family. In terms of assembly, F-type ATPases have 2 components, CF(1) - the catalytic core - and CF(0) - the membrane proton channel. CF(1) has five subunits: alpha(3), beta(3), gamma(1), delta(1), epsilon(1). CF(0) has three main subunits: a, b and c.

The protein resides in the cell inner membrane. Produces ATP from ADP in the presence of a proton gradient across the membrane. The gamma chain is believed to be important in regulating ATPase activity and the flow of protons through the CF(0) complex. The protein is ATP synthase gamma chain of Roseobacter denitrificans (strain ATCC 33942 / OCh 114) (Erythrobacter sp. (strain OCh 114)).